A 154-amino-acid chain; its full sequence is Interleukin-2 (154 aa).

An N-terminal signal peptide occupies residues 1–20; that stretch reads MYRMQLLSCIALSLALITNS. The O-linked (GalNAc...) threonine glycan is linked to Thr-23. Cys-78 and Cys-126 are oxidised to a cystine.

This sequence belongs to the IL-2 family.

Its subcellular location is the secreted. In terms of biological role, cytokine produced by activated CD4-positive helper T-cells and to a lesser extend activated CD8-positive T-cells and natural killer (NK) cells that plays pivotal roles in the immune response and tolerance. Binds to a receptor complex composed of either the high-affinity trimeric IL-2R (IL2RA/CD25, IL2RB/CD122 and IL2RG/CD132) or the low-affinity dimeric IL-2R (IL2RB and IL2RG). Interaction with the receptor leads to oligomerization and conformation changes in the IL-2R subunits resulting in downstream signaling starting with phosphorylation of JAK1 and JAK3. In turn, JAK1 and JAK3 phosphorylate the receptor to form a docking site leading to the phosphorylation of several substrates including STAT5. This process leads to activation of several pathways including STAT, phosphoinositide-3-kinase/PI3K and mitogen-activated protein kinase/MAPK pathways. Functions as a T-cell growth factor and can increase NK-cell cytolytic activity as well. Promotes strong proliferation of activated B-cells and subsequently immunoglobulin production. Plays a pivotal role in regulating the adaptive immune system by controlling the survival and proliferation of regulatory T-cells, which are required for the maintenance of immune tolerance. Moreover, participates in the differentiation and homeostasis of effector T-cell subsets, including Th1, Th2, Th17 as well as memory CD8-positive T-cells. In Papio hamadryas (Hamadryas baboon), this protein is Interleukin-2 (IL2).